The chain runs to 784 residues: MDADDSRAPKGSLRKFLEHLSGAGKAIGVLTSGGDAQGMNAAVRAVVRMGIYVGAKVCFIYEGYQGMVDGGSNIAEADWESVSSILQVGGTIIGSARCQAFRTREGRLKAACNLLQRGITNLCVIGGDGSLTGANLFRKEWSGLLEELARNGQIDKEAVQKYAYLNVVGMVGSIDNDFCGTDMTIGTDSALHRIIEVVDAIMTTAQSHQRTFVLEVMGRHCGYLALVSALACGADWVFLPESPPEEGWEEQMCVKLSENRARKKRLNIIIVAEGAIDTQNKPITSEKIKELVVTQLGYDTRVTILGHVQRGGTPSAFDRILASRMGVEAVIALLEATPDTPACVVSLNGNHAVRLPLMECVQMTQDVQKAMDERRFQDAVRLRGRSFAGNLNTYKRLAIKLPDDQIPKTNCNVAVINVGAPAAGMNAAVRSAVRVGIADGHRMLAIYDGFDGFAKGQIKEIGWTDVGGWTGQGGSILGTKRVLPGKYLEEIATQMRTHSINALLIIGGFEAYLGLLELSAAREKHEEFCVPMVMVPATVSNNVPGSDFSIGADTALNTITDTCDRIKQSASGTKRRVFIIETMGGYCGYLANMGGLAAGADAAYIFEEPFDIRDLQSSVEHLTEKMKTTIQRGLVLRNESCSENYTTDFIYQLYSEEGKGVFDCRKNVLGHMQQGGAPSPFDRNFGTKISARAMEWITAKLKETRGRGKKFTTDDSVCVLGISKRNVIFQPVAELKKQTDFEHRIPKEQWWLKLRPLMKILAKYKASYDVSDSGQLEHVQPWSV.

M1 is modified (N-acetylmethionine). The segment at 1–399 is N-terminal catalytic PFK domain 1; it reads MDADDSRAPK…NLNTYKRLAI (399 aa). Phosphoserine occurs at positions 6, 12, and 21. ATP is bound by residues G34, 97–98, and 127–130; these read RC and GDGS. A Mg(2+)-binding site is contributed by D128. Position 142 is a phosphoserine (S142). Residues 173–175, R210, 217–219, E273, R301, and 307–310 contribute to the substrate site; these read SID, MGR, and HVQR. Residue D175 is the Proton acceptor of the active site. At S386 the chain carries Phosphoserine. K395 carries the post-translational modification N6-acetyllysine. An interdomain linker region spans residues 400–411; it reads KLPDDQIPKTNC. The segment at 412-784 is C-terminal regulatory PFK domain 2; sequence NVAVINVGAP…QLEHVQPWSV (373 aa). Residue R481 participates in beta-D-fructose 2,6-bisphosphate binding. The residue at position 486 (K486) is an N6-acetyllysine. Beta-D-fructose 2,6-bisphosphate contacts are provided by residues 538–542, R576, 583–585, and E639; these read TVSNN and MGG. O-linked (GlcNAc) serine glycosylation occurs at S540. Y651 bears the Phosphotyrosine mark. Beta-D-fructose 2,6-bisphosphate contacts are provided by residues R665 and 671 to 674; that span reads HMQQ. N6-acetyllysine is present on K688. R744 is a beta-D-fructose 2,6-bisphosphate binding site. Phosphoserine is present on S783.

This sequence belongs to the phosphofructokinase type A (PFKA) family. ATP-dependent PFK group I subfamily. Eukaryotic two domain clade 'E' sub-subfamily. As to quaternary structure, homo- and heterotetramers. Phosphofructokinase (PFK) enzyme functions as a tetramer composed of different combinations of 3 types of subunits, called PFKM (M), PFKL (L) and PFKP (P). The composition of the PFK tetramer differs according to the tissue type it is present in. The kinetic and regulatory properties of the tetrameric enzyme are dependent on the subunit composition, hence can vary across tissues. Interacts with ATG4B; promoting phosphorylation of ATG4B. It depends on Mg(2+) as a cofactor. Post-translationally, glcNAcylation decreases enzyme activity. In terms of processing, phosphorylation at Ser-386 promotes interaction with ATG4B.

Its subcellular location is the cytoplasm. It carries out the reaction beta-D-fructose 6-phosphate + ATP = beta-D-fructose 1,6-bisphosphate + ADP + H(+). It participates in carbohydrate degradation; glycolysis; D-glyceraldehyde 3-phosphate and glycerone phosphate from D-glucose: step 3/4. Allosterically activated by ADP, AMP, or fructose 2,6-bisphosphate, and allosterically inhibited by ATP or citrate. Catalyzes the phosphorylation of D-fructose 6-phosphate to fructose 1,6-bisphosphate by ATP, the first committing step of glycolysis. This chain is ATP-dependent 6-phosphofructokinase, platelet type (PFKP), found in Pongo abelii (Sumatran orangutan).